Reading from the N-terminus, the 90-residue chain is Guanine nucleotide-binding protein subunit gamma (90 aa).

C86 carries the S-palmitoyl cysteine lipid modification. Position 87 is a cysteine methyl ester (C87). C87 carries the S-farnesyl cysteine lipid modification. Positions 88–90 are cleaved as a propeptide — removed in mature form; sequence CIM.

The protein belongs to the G protein gamma family. G proteins are composed of 3 units, alpha, beta and gamma.

It is found in the membrane. The chain is Guanine nucleotide-binding protein subunit gamma from Eremothecium gossypii (strain ATCC 10895 / CBS 109.51 / FGSC 9923 / NRRL Y-1056) (Yeast).